The chain runs to 203 residues: Molybdenum cofactor guanylyltransferase (203 aa).

Residues 20-22 (LAG), Lys-33, Asn-61, Asp-78, and Asp-108 each bind GTP. Mg(2+) is bound at residue Asp-108.

Belongs to the MobA family. Monomer. Mg(2+) serves as cofactor.

It is found in the cytoplasm. The enzyme catalyses Mo-molybdopterin + GTP + H(+) = Mo-molybdopterin guanine dinucleotide + diphosphate. Transfers a GMP moiety from GTP to Mo-molybdopterin (Mo-MPT) cofactor (Moco or molybdenum cofactor) to form Mo-molybdopterin guanine dinucleotide (Mo-MGD) cofactor. This chain is Molybdenum cofactor guanylyltransferase, found in Vibrio cholerae serotype O1 (strain ATCC 39315 / El Tor Inaba N16961).